We begin with the raw amino-acid sequence, 318 residues long: Large ribosomal subunit protein uL10 (318 aa).

Position 24 is a phosphotyrosine (tyrosine 24). A Phosphothreonine modification is found at threonine 59. A Glycyl lysine isopeptide (Lys-Gly) (interchain with G-Cter in ubiquitin) cross-link involves residue lysine 264. A Glycyl lysine isopeptide (Lys-Gly) (interchain with G-Cter in SUMO1); alternate cross-link involves residue lysine 298. Lysine 298 participates in a covalent cross-link: Glycyl lysine isopeptide (Lys-Gly) (interchain with G-Cter in SUMO2); alternate. Positions 298–318 (KVEAKEESEESDEDMGFGLFD) are disordered. The segment covering 303 to 312 (EESEESDEDM) has biased composition (acidic residues). 2 positions are modified to phosphoserine: serine 305 and serine 308.

This sequence belongs to the universal ribosomal protein uL10 family. P0 forms a pentameric complex by interaction with dimers of P1 and P2. Identified in a IGF2BP1-dependent mRNP granule complex containing untranslated mRNAs. Interacts with APEX1. Interacts with FMR1 isoform 6. Ubiquitinated at Lys-264 by RNF14 and RNF25 in response to ribosome collisions (ribosome stalling).

The protein localises to the nucleus. It is found in the cytoplasm. Its function is as follows. Ribosomal protein P0 is the functional equivalent of E.coli protein L10. This Oryctolagus cuniculus (Rabbit) protein is Large ribosomal subunit protein uL10 (RPLP0).